Reading from the N-terminus, the 558-residue chain is Transcription termination factor MTEF18, mitochondrial (558 aa).

Residues 1–58 (MFMVRLKFASISHNFSTVAAKHRRVPSKYKSLAIGKAQQAITDYLHTTRSLSYTHAEQ) constitute a mitochondrion transit peptide.

This sequence belongs to the mTERF family.

It is found in the mitochondrion. Functionally, transcription termination factor involved in the regulation of mitochondrial-encoded gene expression. Essential for normal plant growth and development. This chain is Transcription termination factor MTEF18, mitochondrial, found in Arabidopsis thaliana (Mouse-ear cress).